The chain runs to 137 residues: Histone H2B.3 (137 aa).

Positions 1–37 (KPAEKKPAEKTPVAEKAPAEKKPKAGKKLPKDAAAGD) are enriched in basic and acidic residues. The disordered stretch occupies residues 1-45 (KPAEKKPAEKTPVAEKAPAEKKPKAGKKLPKDAAAGDKKKKRSKK). N6-acetyllysine is present on residues lysine 27 and lysine 28. Lysine 133 is covalently cross-linked (Glycyl lysine isopeptide (Lys-Gly) (interchain with G-Cter in ubiquitin)).

The protein belongs to the histone H2B family. As to quaternary structure, the nucleosome is a histone octamer containing two molecules each of H2A, H2B, H3 and H4 assembled in one H3-H4 heterotetramer and two H2A-H2B heterodimers. The octamer wraps approximately 147 bp of DNA. Post-translationally, can be acetylated to formH2BK33ac and H2BK34ac. In terms of processing, monoubiquitinated to form H2BK143ub1; may give a specific tag for epigenetic transcriptional activation. In terms of tissue distribution, ubiquitous. Highest level in shoots, fruits and young flower buds, including petals, anthers and ovules.

It is found in the nucleus. The protein resides in the chromosome. Core component of nucleosome. Nucleosomes wrap and compact DNA into chromatin, limiting DNA accessibility to the cellular machineries which require DNA as a template. Histones thereby play a central role in transcription regulation, DNA repair, DNA replication and chromosomal stability. DNA accessibility is regulated via a complex set of post-translational modifications of histones, also called histone code, and nucleosome remodeling. In Solanum lycopersicum (Tomato), this protein is Histone H2B.3 (H2B-3).